The chain runs to 773 residues: Carnitine O-palmitoyltransferase 1, liver isoform (773 aa).

At A2 the chain carries N-acetylalanine. At 2–47 (AEAHQAVAFQFTVTPDGIDLRLSHEALRQIYLSGLHSWKKKFIRFK) the chain is on the cytoplasmic side. The helical transmembrane segment at 48 to 73 (NGIITGVYPASPSSWLIVVVGVMTTM) threads the bilayer. Residues 74–102 (YAKIDPSLGIIAKINRTLETANCMSSQTK) lie on the Mitochondrial intermembrane side of the membrane. The chain crosses the membrane as a helical span at residues 103 to 122 (NVVSGVLFGTGLWVALIVTM). The Cytoplasmic segment spans residues 123–773 (RYSLKVLLSY…LFGLSSNSKK (651 aa)). 3'-nitrotyrosine is present on Y282. Catalysis depends on H473, which acts as the Proton acceptor. 555 to 567 (GKGIIKKCRTSPD) serves as a coordination point for CoA. Phosphothreonine is present on T588. Position 589 is a 3'-nitrotyrosine (Y589). 2 residues coordinate (R)-carnitine: Y589 and T602. At T604 the chain carries Phosphothreonine. S741 and S747 each carry phosphoserine.

The protein belongs to the carnitine/choline acetyltransferase family. As to quaternary structure, homohexamer and homotrimer. Identified in a complex that contains at least CPT1A, ACSL1 and VDAC1. Also identified in complexes with ACSL1 and VDAC2 and VDAC3. Interacts with ZDHHC4. As to expression, strong expression in kidney and heart, and lower in liver and skeletal muscle.

Its subcellular location is the mitochondrion outer membrane. It catalyses the reaction (R)-carnitine + hexadecanoyl-CoA = O-hexadecanoyl-(R)-carnitine + CoA. It carries out the reaction succinyl-CoA + L-lysyl-[protein] = N(6)-succinyl-L-lysyl-[protein] + CoA + H(+). Its pathway is lipid metabolism; fatty acid beta-oxidation. With respect to regulation, inhibited by malonyl-CoA. In terms of biological role, catalyzes the transfer of the acyl group of long-chain fatty acid-CoA conjugates onto carnitine, an essential step for the mitochondrial uptake of long-chain fatty acids and their subsequent beta-oxidation in the mitochondrion. Also possesses a lysine succinyltransferase activity that can regulate enzymatic activity of substrate proteins such as ENO1 and metabolism independent of its classical carnitine O-palmitoyltransferase activity. Plays an important role in hepatic triglyceride metabolism. Also plays a role in inducible regulatory T-cell (iTreg) differentiation once activated by butyryl-CoA that antagonizes malonyl-CoA-mediated CPT1A repression. Sustains the IFN-I response by recruiting ZDHCC4 to palmitoylate MAVS at the mitochondria leading to MAVS stabilization and activation. Promotes ROS-induced oxidative stress in liver injury via modulation of NFE2L2 and NLRP3-mediated signaling pathways. In Homo sapiens (Human), this protein is Carnitine O-palmitoyltransferase 1, liver isoform.